Reading from the N-terminus, the 415-residue chain is Fructose-like permease IIC component (415 aa).

Over 1–46 (MAIKKRSATVVPGASGAAAAVKNPQASKSSFWGELPQHVMSGISRM) the chain is Cytoplasmic. A PTS EIIC type-2 domain is found at 35–410 (LPQHVMSGIS…RLMMFRKGKL (376 aa)). The helical transmembrane segment at 47–67 (VPTLIMGGVILAFSQLIAYSW) threads the bilayer. Residues 68–101 (LKIPAEIGIMDALNSGKFSGFDLSLLKFAWLSQS) lie on the Periplasmic side of the membrane. The chain crosses the membrane as a helical span at residues 102-122 (FGGVLFGFAIPMFAAFVANSI). Residues 123-126 (GGKL) are Cytoplasmic-facing. Residues 127-147 (AFPAGFIGGLMSTQPTQLLNF) form a helical membrane-spanning segment. Residues 148 to 157 (DPSTMQWATS) are Periplasmic-facing. Residues 158–178 (SPVPSTFIGALIISIVAGYLV) form a helical membrane-spanning segment. The Cytoplasmic segment spans residues 179–197 (KWMNQKIQLPDFLLAFKTT). Residues 198 to 218 (FLLPILSAIFVMLAMYYVITP) form a helical membrane-spanning segment. The Periplasmic segment spans residues 219 to 237 (FGGWINGGIRTVLTAAGEK). The chain crosses the membrane as a helical span at residues 238-258 (GALMYAMGIAAATAIDLGGPI). Topologically, residues 259–276 (NKAAGFVAFSFTTDHVLP) are cytoplasmic. A helical transmembrane segment spans residues 277 to 297 (VTARSIAIVIPPIGLGLATII). Residues 298-318 (DRRLTGKRLFNAQLYPQGKTA) lie on the Periplasmic side of the membrane. A helical membrane pass occupies residues 319-339 (MFLAFMGISEGAIPFALESPI). Residues 340-341 (TA) are Cytoplasmic-facing. Residues 342 to 362 (IPSYMVGAIVGSTAAVWLGAV) traverse the membrane as a helical segment. Topologically, residues 363–378 (QWFPESAIWAWPLVTN) are periplasmic. Residues 379 to 399 (LGVYMAGIALGAVITALMVVF) form a helical membrane-spanning segment. Residues 400-415 (LRLMMFRKGKLLIDSL) lie on the Cytoplasmic side of the membrane.

Its subcellular location is the cell inner membrane. Its function is as follows. The phosphoenolpyruvate-dependent sugar phosphotransferase system (PTS), a major carbohydrate active -transport system, catalyzes the phosphorylation of incoming sugar substrates concomitant with their translocation across the cell membrane. The protein is Fructose-like permease IIC component (fryC) of Escherichia coli O157:H7.